We begin with the raw amino-acid sequence, 125 residues long: Small ribosomal subunit protein uS11 (125 aa).

This sequence belongs to the universal ribosomal protein uS11 family. Part of the 30S ribosomal subunit. Interacts with proteins S7 and S18. Binds to IF-3.

Located on the platform of the 30S subunit, it bridges several disparate RNA helices of the 16S rRNA. Forms part of the Shine-Dalgarno cleft in the 70S ribosome. In Aquifex aeolicus (strain VF5), this protein is Small ribosomal subunit protein uS11.